The chain runs to 430 residues: DNA-binding protein cre-1 (430 aa).

Polar residues predominate over residues 1–19 (MQRVQSAVDFSNLLNPSES). 4 disordered regions span residues 1-77 (MQRV…LPRP), 97-187 (IRTH…PHSY), 265-340 (SRSH…RNLS), and 357-430 (LDGQ…MDRL). The segment covering 30 to 46 (PRQQTAQPQQQQQQPQP) has biased composition (low complexity). 2 consecutive C2H2-type zinc fingers follow at residues 78–100 (YKCP…IRTH) and 106–130 (HACQ…SRIH). Residues 97–106 (IRTHTGEKPH) are compositionally biased toward basic and acidic residues. Composition is skewed to polar residues over residues 130–147 (HSNP…QQQH) and 175–187 (AMSS…PHSY). Positions 268-277 (HSHEDHDDHY) are enriched in basic and acidic residues. The span at 289–303 (PNSPNSTAPSSPTFS) shows a compositional bias: low complexity. Residues 412 to 422 (SVRNSSSTSLS) show a composition bias toward polar residues.

It belongs to the creA/MIG C2H2-type zinc-finger protein family.

It is found in the nucleus. In terms of biological role, involved in carbon catabolite repression. Represses the transcription of a number of genes by binding to a GC-rich region in their promoter. The protein is DNA-binding protein cre-1 (cre-1) of Neurospora crassa (strain ATCC 24698 / 74-OR23-1A / CBS 708.71 / DSM 1257 / FGSC 987).